A 675-amino-acid polypeptide reads, in one-letter code: Heat shock 70 kDa protein 12A (675 aa).

Residues 1–13 (MADKEAGGSDGPR) show a composition bias toward basic and acidic residues. Positions 1–45 (MADKEAGGSDGPRETAPTSAYSSPARSLGDTGITPLSPSHIVNDT) are disordered. Alanine 2 is modified (N-acetylalanine). Composition is skewed to polar residues over residues 16–25 (APTSAYSSPA) and 34–45 (TPLSPSHIVNDT).

This sequence belongs to the heat shock protein 70 family. In terms of assembly, interacts with SORL1 (via cytosolic C-terminus); this interaction affects SORL1 internalization and subcellular localization. In terms of tissue distribution, widely expressed with highest levels in brain, kidney and muscle.

It localises to the cytoplasm. Its subcellular location is the nucleus. Functionally, adapter protein for SORL1, but not SORT1. Delays SORL1 internalization and affects SORL1 subcellular localization. The polypeptide is Heat shock 70 kDa protein 12A (HSPA12A) (Homo sapiens (Human)).